We begin with the raw amino-acid sequence, 375 residues long: Deoxyribonuclease-2 (375 aa).

The first 21 residues, 1 to 21 (MGLSPAAVLIFLLLGVSQTYA), serve as a signal peptide directing secretion. N-linked (GlcNAc...) asparagine glycosylation is present at Asn131.

It belongs to the DNase II family.

The enzyme catalyses Endonucleolytic cleavage to nucleoside 3'-phosphates and 3'-phosphooligonucleotide end-products.. Its function is as follows. Hydrolyzes DNA under acidic conditions with a preference for double-stranded DNA. Implicated in apoptosis. This Caenorhabditis elegans protein is Deoxyribonuclease-2 (nuc-1).